The primary structure comprises 856 residues: DNA mismatch repair protein MutS (856 aa).

ATP is bound at residue 607–614; that stretch reads GPNMAGKS.

It belongs to the DNA mismatch repair MutS family.

This protein is involved in the repair of mismatches in DNA. It is possible that it carries out the mismatch recognition step. This protein has a weak ATPase activity. In Cytophaga hutchinsonii (strain ATCC 33406 / DSM 1761 / CIP 103989 / NBRC 15051 / NCIMB 9469 / D465), this protein is DNA mismatch repair protein MutS.